Consider the following 282-residue polypeptide: Homeobox-leucine zipper protein HAT1 (282 aa).

The tract at residues 71–134 is disordered; sequence LEEETGVSSP…EEDYGGETCR (64 aa). Residues 76–89 show a composition bias toward low complexity; that stretch reads GVSSPNSTISSTVS. Positions 132–191 form a DNA-binding region, homeobox; that stretch reads TCRKKLRLSKDQSAVLEDTFKEHNTLNPKQKLALAKKLGLTARQVEVWFQNRRARTKLKQ. Residues 199–220 are leucine-zipper; that stretch reads LKRCVEKLTEENRRLEKEAAEL.

Belongs to the HD-ZIP homeobox family. Class II subfamily. In terms of assembly, interacts with BZIP30.

The protein localises to the nucleus. Its function is as follows. Probable transcription factor. The chain is Homeobox-leucine zipper protein HAT1 (HAT1) from Arabidopsis thaliana (Mouse-ear cress).